A 118-amino-acid chain; its full sequence is Na(+)/H(+) antiporter subunit G1 (118 aa).

3 helical membrane-spanning segments follow: residues 4 to 24 (IILI…SALA), 38 to 58 (AHAA…GTFL), and 60 to 80 (FIAT…FVLI).

This sequence belongs to the CPA3 antiporters (TC 2.A.63) subunit G family. May form a heterooligomeric complex that consists of seven subunits: mnhA1, mnhB1, mnhC1, mnhD1, mnhE1, mnhF1 and mnhG1.

The protein resides in the cell membrane. Functionally, mnh complex is a Na(+)/H(+) antiporter involved in Na(+) excretion. The chain is Na(+)/H(+) antiporter subunit G1 (mnhG1) from Staphylococcus aureus (strain Mu3 / ATCC 700698).